A 423-amino-acid chain; its full sequence is 3-isopropylmalate dehydratase large subunit 1 (423 aa).

C302, C362, and C365 together coordinate [4Fe-4S] cluster.

This sequence belongs to the aconitase/IPM isomerase family. LeuC type 2 subfamily. In terms of assembly, heterodimer of LeuC and LeuD. [4Fe-4S] cluster serves as cofactor.

It catalyses the reaction (2R,3S)-3-isopropylmalate = (2S)-2-isopropylmalate. Its pathway is amino-acid biosynthesis; L-leucine biosynthesis; L-leucine from 3-methyl-2-oxobutanoate: step 2/4. In terms of biological role, catalyzes the isomerization between 2-isopropylmalate and 3-isopropylmalate, via the formation of 2-isopropylmaleate. In Pyrococcus abyssi (strain GE5 / Orsay), this protein is 3-isopropylmalate dehydratase large subunit 1.